Here is a 34-residue protein sequence, read N- to C-terminus: ALWFTMLKKLGTMALHAGKAALGAAANTISQGTQ.

Belongs to the frog skin active peptide (FSAP) family. Dermaseptin subfamily. Expressed by the skin glands.

The protein resides in the secreted. In terms of biological role, potent antimicrobial peptide with activity against bacteria and protozoa. Also has activity against fungi. Probably acts by disturbing membrane functions with its amphipathic structure. This chain is Dermaseptin-S2, found in Phyllomedusa sauvagei (Sauvage's leaf frog).